Reading from the N-terminus, the 531-residue chain is MKPVKPPRINGRVPVLSAQEAVNYIPDEATLCVLGAGGGILEATTLITALADKYKQTQTPRNLSIISPTGLGDRADRGISPLAQEGLVKWALCGHWGQSPRISDLAEQNKIIAYNYPQGVLTQTLRAAAAHQPGIISDIGIGTFVDPRQQGGKLNEVTKEDLIKLVEFDNKEYLYYKAIAPDIAFIRATTCDSEGYATFEDEVMYLDALVIAQAVHNNGGIVMMQVQKMVKKATLHPKSVRIPGYLVDIVVVDPDQSQLYGGAPVNRFISGDFTLDDSTKLSLPLNQRKLVARRALFEMRKGAVGNVGVGIADGIGLVAREEGCADDFILTVETGPIGGITSQGIAFGANVNTRAILDMTSQFDFYHGGGLDVCYLSFAEVDQHGNVGVHKFNGKIMGTGGFIDISATSKKIIFCGTLTAGSLKTEIADGKLNIVQEGRVKKFIRELPEITFSGKIALERGLDVRYITERAVFTLKEDGLHLIEIAPGVDLQKDILDKMDFTPVISPELKLMDERLFIDAAMGFVLPEAAH.

E333 serves as the catalytic 5-glutamyl coenzyme A thioester intermediate.

The protein belongs to the 3-oxoacid CoA-transferase family. In terms of assembly, homotetramer; dimer of dimers.

It catalyses the reaction an acyl-CoA + acetate = a carboxylate + acetyl-CoA. CoA transferase having broad substrate specificity for short-chain acyl-CoA thioesters with the activity decreasing when the length of the carboxylic acid chain exceeds four carbons. Exhibits high activity with acetoacetyl-CoA, propionyl-CoA, crotonoyl-CoA or butyryl-CoA as donors, with acetate as an acceptor. When acetyl-CoA is used as the donor, propionate, acetoacetate, butyrate, isobutyrate, and 4-hydroxybutyrate can be utilized as acceptors but not isovalerate. May play a role in short-chain fatty acid metabolism in E.coli. The protein is Acetate CoA-transferase YdiF of Escherichia coli O157:H7.